We begin with the raw amino-acid sequence, 388 residues long: Chorismate synthase (388 aa).

NADP(+) contacts are provided by Arg-39 and Arg-45. Residues 130 to 132 (RSS), 251 to 252 (NA), Gly-296, 311 to 315 (KPIPT), and Arg-337 each bind FMN.

It belongs to the chorismate synthase family. Homotetramer. Requires FMNH2 as cofactor.

It catalyses the reaction 5-O-(1-carboxyvinyl)-3-phosphoshikimate = chorismate + phosphate. The protein operates within metabolic intermediate biosynthesis; chorismate biosynthesis; chorismate from D-erythrose 4-phosphate and phosphoenolpyruvate: step 7/7. In terms of biological role, catalyzes the anti-1,4-elimination of the C-3 phosphate and the C-6 proR hydrogen from 5-enolpyruvylshikimate-3-phosphate (EPSP) to yield chorismate, which is the branch point compound that serves as the starting substrate for the three terminal pathways of aromatic amino acid biosynthesis. This reaction introduces a second double bond into the aromatic ring system. The polypeptide is Chorismate synthase (Streptococcus pyogenes serotype M6 (strain ATCC BAA-946 / MGAS10394)).